A 226-amino-acid chain; its full sequence is Cytochrome c oxidase subunit 2 (226 aa).

At 1-14 (MAYPLQLGLQDATS) the chain is on the mitochondrial intermembrane side. A helical transmembrane segment spans residues 15–45 (PIMEELTSFHDHTLMIVFLISTLVLYIISLM). The Mitochondrial matrix segment spans residues 46 to 59 (LTTKLTHTSTMDAQ). The chain crosses the membrane as a helical span at residues 60-87 (EIETIWTILPAIILIMIALPSLRVLYMM). The Mitochondrial intermembrane segment spans residues 88–226 (DEINNPALTV…KYFEAWSASM (139 aa)). Cu cation-binding residues include H161, C196, E198, C200, H204, and M207. E198 provides a ligand contact to Mg(2+). Position 218 is a phosphotyrosine (Y218).

This sequence belongs to the cytochrome c oxidase subunit 2 family. In terms of assembly, component of the cytochrome c oxidase (complex IV, CIV), a multisubunit enzyme composed of 14 subunits. The complex is composed of a catalytic core of 3 subunits MT-CO1, MT-CO2 and MT-CO3, encoded in the mitochondrial DNA, and 11 supernumerary subunits COX4I, COX5A, COX5B, COX6A, COX6B, COX6C, COX7A, COX7B, COX7C, COX8 and NDUFA4, which are encoded in the nuclear genome. The complex exists as a monomer or a dimer and forms supercomplexes (SCs) in the inner mitochondrial membrane with NADH-ubiquinone oxidoreductase (complex I, CI) and ubiquinol-cytochrome c oxidoreductase (cytochrome b-c1 complex, complex III, CIII), resulting in different assemblies (supercomplex SCI(1)III(2)IV(1) and megacomplex MCI(2)III(2)IV(2)). Found in a complex with TMEM177, COA6, COX18, COX20, SCO1 and SCO2. Interacts with TMEM177 in a COX20-dependent manner. Interacts with COX20. Interacts with COX16. It depends on Cu cation as a cofactor.

It is found in the mitochondrion inner membrane. The catalysed reaction is 4 Fe(II)-[cytochrome c] + O2 + 8 H(+)(in) = 4 Fe(III)-[cytochrome c] + 2 H2O + 4 H(+)(out). Functionally, component of the cytochrome c oxidase, the last enzyme in the mitochondrial electron transport chain which drives oxidative phosphorylation. The respiratory chain contains 3 multisubunit complexes succinate dehydrogenase (complex II, CII), ubiquinol-cytochrome c oxidoreductase (cytochrome b-c1 complex, complex III, CIII) and cytochrome c oxidase (complex IV, CIV), that cooperate to transfer electrons derived from NADH and succinate to molecular oxygen, creating an electrochemical gradient over the inner membrane that drives transmembrane transport and the ATP synthase. Cytochrome c oxidase is the component of the respiratory chain that catalyzes the reduction of oxygen to water. Electrons originating from reduced cytochrome c in the intermembrane space (IMS) are transferred via the dinuclear copper A center (CU(A)) of subunit 2 and heme A of subunit 1 to the active site in subunit 1, a binuclear center (BNC) formed by heme A3 and copper B (CU(B)). The BNC reduces molecular oxygen to 2 water molecules using 4 electrons from cytochrome c in the IMS and 4 protons from the mitochondrial matrix. This is Cytochrome c oxidase subunit 2 (MT-CO2) from Perognathus flavus (Silky pocket mouse).